We begin with the raw amino-acid sequence, 150 residues long: Soluble pyridine nucleotide transhydrogenase (150 aa).

The protein belongs to the class-I pyridine nucleotide-disulfide oxidoreductase family. It depends on FAD as a cofactor.

It is found in the cytoplasm. It catalyses the reaction NAD(+) + NADPH = NADH + NADP(+). Conversion of NADPH, generated by peripheral catabolic pathways, to NADH, which can enter the respiratory chain for energy generation. In Pectobacterium carotovorum subsp. carotovorum (Erwinia carotovora subsp. carotovora), this protein is Soluble pyridine nucleotide transhydrogenase (sthA).